The chain runs to 456 residues: uncharacterized protein (456 aa).

A compositionally biased stretch (low complexity) spans 415-428; the sequence is SNSNGSSSSGNSSS. The tract at residues 415-444 is disordered; it reads SNSNGSSSSGNSSSIYNSHLMNDKKKNNNA.

This is an uncharacterized protein from Saccharomyces cerevisiae (strain ATCC 204508 / S288c) (Baker's yeast).